The chain runs to 271 residues: Urease accessory protein UreD (271 aa).

Belongs to the UreD family. UreD, UreF and UreG form a complex that acts as a GTP-hydrolysis-dependent molecular chaperone, activating the urease apoprotein by helping to assemble the nickel containing metallocenter of UreC. The UreE protein probably delivers the nickel.

The protein localises to the cytoplasm. Functionally, required for maturation of urease via the functional incorporation of the urease nickel metallocenter. In Bacillus sp. (strain TB-90), this protein is Urease accessory protein UreD.